The sequence spans 233 residues: Preflagellin peptidase (233 aa).

Met1 is a topological domain (cytoplasmic). A helical membrane pass occupies residues 2 to 18 (IAYAIGLLGLLIASIQD). At 19–23 (IKSRE) the chain is on the extracellular side. The helical transmembrane segment at 24-46 (IENYIWIGMAVIGLLLSTYLSFT) threads the bilayer. Over 47–49 (TGN) the chain is Cytoplasmic. A helical transmembrane segment spans residues 50–72 (FMPIISSISGFIICFIIGYLMFV). Residues 73-78 (LGIGGA) are Extracellular-facing. Residues 79–89 (DGKILMGMGAL) traverse the membrane as a helical segment. The Cytoplasmic segment spans residues 90 to 110 (IPSYAFPVYSSLQPLYTMEYI). The helical transmembrane segment at 111–139 (PWFPLLVFFNGVILMIVLPIYLFFKNLSN) threads the bilayer. The Extracellular portion of the chain corresponds to 140–207 (GVKPKKLKEY…QYVWATPELP (68 aa)). A helical membrane pass occupies residues 208–219 (LLVPIALSYIIT). Residues 220-233 (PFLGDKILSIILPM) are Cytoplasmic-facing.

The protein belongs to the peptidase A24 family. Archaeal preflagellin peptidase subfamily.

Its subcellular location is the cell membrane. The enzyme catalyses Cleaves the signal peptide of 3 to 12 amino acids from the N-terminal of preflagellin, usually at Arg-Gly-|- or Lys-Gly-|-, to release flagellin.. Functionally, cleaves the N-terminal leader peptide from preflagellins. The processing of preflagellins is necessary for assembly of flagellins into a flagellum structure. In Methanococcus voltae, this protein is Preflagellin peptidase (flaK).